The chain runs to 155 residues: Perlucin (155 aa).

3 disulfides stabilise this stretch: Cys-2–Cys-13, Cys-30–Cys-127, and Cys-102–Cys-119. The C-type lectin domain occupies Asn-9–Glu-128. The N-linked (GlcNAc...) asparagine glycan is linked to Asn-84. Repeat copies occupy residues Asn-136–Arg-145 and Asp-146–Arg-155.

Glycosylated.

Functionally, may promote nucleation and/or growth of calcium carbonate crystals. Binds to D-galactose and D-mannose/D-glucose. This is Perlucin from Haliotis laevigata (Smooth Australian abalone).